The primary structure comprises 45 residues: MGYKCTRCKQKVEIDYEYTGIRCPYCGHRILVKERPTTIKRIKAE.

Zn(2+) is bound by residues Cys8, Cys23, and Cys26.

The protein belongs to the archaeal Rpo12/eukaryotic RPC10 RNA polymerase subunit family. As to quaternary structure, part of the RNA polymerase complex. Requires Zn(2+) as cofactor.

The protein localises to the cytoplasm. It catalyses the reaction RNA(n) + a ribonucleoside 5'-triphosphate = RNA(n+1) + diphosphate. DNA-dependent RNA polymerase (RNAP) catalyzes the transcription of DNA into RNA using the four ribonucleoside triphosphates as substrates. In Methanosarcina acetivorans (strain ATCC 35395 / DSM 2834 / JCM 12185 / C2A), this protein is DNA-directed RNA polymerase subunit Rpo12.